Here is a 277-residue protein sequence, read N- to C-terminus: Probable ABC transporter permease protein y4oR (277 aa).

The next 7 helical transmembrane spans lie at 15 to 35 (LWTLFWCVLAFVYLFPYTWMV), 79 to 99 (VVTIVSVVLVIAVSAPAAYAL), 109 to 129 (LLVAILVARIIPGIAIGVPVY), 140 to 160 (TYQALIIINVAVNIPFAIWLM), 189 to 209 (IMMPLVLGGMLATAVFVFIAV), 213 to 233 (FLFALILTTSVSPTAPLAMLG), and 242 to 262 (WDAVGAAAFLVSTPVIAFAFI). The region spanning 74 to 263 (IINSAVVTIV…TPVIAFAFIM (190 aa)) is the ABC transmembrane type-1 domain.

The protein belongs to the binding-protein-dependent transport system permease family. MalFG subfamily.

Its subcellular location is the cell inner membrane. Functionally, probably part of the binding-protein-dependent transport system y4oPQRS. This system probably transports a sugar-like molecule. Probably responsible for the translocation of the substrate across the membrane. This is Probable ABC transporter permease protein y4oR from Sinorhizobium fredii (strain NBRC 101917 / NGR234).